Reading from the N-terminus, the 90-residue chain is DNA-binding protein HTa (90 aa).

The protein belongs to the bacterial histone-like protein family. In terms of assembly, homotetramer.

In terms of biological role, histone-like DNA-binding protein which is capable of wrapping DNA to stabilize it, and thus to prevent its denaturation under extreme environmental conditions. The polypeptide is DNA-binding protein HTa (Thermoplasma acidophilum (strain ATCC 25905 / DSM 1728 / JCM 9062 / NBRC 15155 / AMRC-C165)).